The following is a 228-amino-acid chain: C-type lectin domain-containing protein 88 (228 aa).

Residues 1–18 (MQFIFFGTLFSGLLLVCA) form the signal peptide. An O-linked (Xyl...) (chondroitin sulfate) serine glycan is attached at Ser-27. Residues 88 to 218 (YSDSCYWVET…CTYLFYSICE (131 aa)) form the C-type lectin domain. Cystine bridges form between Cys-109–Cys-217 and Cys-188–Cys-209. Residue Asn-220 is glycosylated (N-linked (GlcNAc...) asparagine).

In Caenorhabditis elegans, this protein is C-type lectin domain-containing protein 88.